The primary structure comprises 312 residues: Protein dif-1 (312 aa).

3 Solcar repeats span residues 2-93 (SDVL…GKWL), 102-193 (MTFI…LKKK), and 203-289 (LSPG…TLAA). 6 consecutive transmembrane segments (helical) span residues 5-25 (LLNFIAGGVGGSCTVIVGHPF), 69-89 (MAAPLVGVSPLFAVFFGGCAV), 104-124 (FIQNANAGALAGVFTTIVMVP), 172-192 (TLLRDIPASAAYLSVYEYLKK), 209-229 (LMAGGLAGIANWGVCIPADVL), and 261-282 (LFKGFWPVMLRAFPANAACFFG).

Belongs to the mitochondrial carrier (TC 2.A.29) family.

It is found in the mitochondrion inner membrane. Functionally, seems to play a role in the maintenance of tissue differentiation in the developing embryo, but not for its initiation. The chain is Protein dif-1 (dif-1) from Caenorhabditis elegans.